The sequence spans 171 residues: MYHLFHSRLCLPQGLRSLLAQRMPAAKLLPNDSAVAAYARHRRVVAVGDRVSETLIRHGVKPWVMVFDCVEARRDKTCPSIPEGYAILRTRNERSTVEPGAVEVIRKALRQGHTVVRVDGEEDLLALPALLYGDVGSVVLYGLPGKGVVAAAVNREAKLLAMRVLEFFEPC.

Aspartate 49, valine 51, aspartate 68, and glutamate 122 together coordinate GTP.

Belongs to the GTP-dependent DPCK family.

It carries out the reaction 3'-dephospho-CoA + GTP = GDP + CoA + H(+). It participates in cofactor biosynthesis; coenzyme A biosynthesis. Functionally, catalyzes the GTP-dependent phosphorylation of the 3'-hydroxyl group of dephosphocoenzyme A to form coenzyme A (CoA). This Hyperthermus butylicus (strain DSM 5456 / JCM 9403 / PLM1-5) protein is GTP-dependent dephospho-CoA kinase.